The primary structure comprises 335 residues: Gibberellin 2-beta-dioxygenase 3 (335 aa).

One can recognise a Fe2OG dioxygenase domain in the interval 175–278 (ESDSCLRMNH…RISMIYFAGP (104 aa)). 3 residues coordinate Fe cation: histidine 202, aspartate 204, and histidine 259. Arginine 269 is an active-site residue.

This sequence belongs to the iron/ascorbate-dependent oxidoreductase family. GA2OX subfamily. It depends on Fe(2+) as a cofactor. Not expressed in the apex.

It carries out the reaction gibberellin A1 + 2-oxoglutarate + O2 = gibberellin A8 + succinate + CO2. The protein operates within plant hormone biosynthesis; gibberellin biosynthesis. Functionally, catalyzes the 2-beta-hydroxylation of several biologically active gibberellins, leading to the homeostatic regulation of their endogenous level. Catabolism of gibberellins (GAs) plays a central role in plant development. Converts GA9/GA20 to GA51/GA29 and GA4/GA1 to GA34/GA8. This is Gibberellin 2-beta-dioxygenase 3 (GA2OX3) from Arabidopsis thaliana (Mouse-ear cress).